We begin with the raw amino-acid sequence, 332 residues long: 2-oxoglutarate-dependent dioxygenase ecdK (332 aa).

The 117-residue stretch at 178–294 folds into the Fe2OG dioxygenase domain; it reads HASELRLNHY…RRSVAFFLKP (117 aa). Fe cation contacts are provided by H206, D208, and H266. 2-oxoglutarate is bound at residue R285.

The protein belongs to the iron/ascorbate-dependent oxidoreductase family. It depends on Fe(2+) as a cofactor.

It participates in antifungal biosynthesis. 2-oxoglutarate-dependent dioxygenase; part of the gene cluster that mediates the biosynthesis of echinocandin B, a fungal lipidated cyclic hexapeptide that acts as an antifungal agent. Linoleoyl-AMP, produced by the fatty-acyl-AMP ligase ecdI, is transferred to the initiation carrier domain (T0) of ecdA. The linoleoyl-S-phosphopantetheinyl-T0 is sequentially extended with L-ornithine, L-threonine, L-proline, L-homotyrosine, L-threonine, and 4R-methyl-L-proline to form the linear hexapeptide. Thereafter, the terminal condensation (C7) performs macrocyclization of the NRPS product and the cyclic scaffold is released from ecdA. All six of the amino acid residues are hydroxylated, including 4R,5R-dihydroxy-L-ornithine, 4R-hydroxyl-L-proline, 3S,4S-dihydroxy-L-homotyrosine, and 3S-hydroxyl-4S-methyl-L-prolin. In the pathway, all the hydroxylation reactions are proposed to occur following completion of the cyclic peptide, so the unhydroxylated precursor produced by ecdA will undergo six rounds of hydroxylation. Five hydroxylase genes (ecdG, ecdH, ecdK, htyE and htyF) are embedded within the echinocandin B (ecd) and L-homotyrosine (hty) clusters. This chain is 2-oxoglutarate-dependent dioxygenase ecdK, found in Aspergillus rugulosus (Emericella rugulosa).